The chain runs to 904 residues: Protein translocase subunit SecA (904 aa).

Residues Gln-87, 105-109 (GEGKT), and Asp-512 contribute to the ATP site. The disordered stretch occupies residues 851-870 (LARQQQLSHQTDNSALMSEE). Zn(2+) contacts are provided by Cys-888, Cys-890, Cys-899, and His-900.

The protein belongs to the SecA family. Monomer and homodimer. Part of the essential Sec protein translocation apparatus which comprises SecA, SecYEG and auxiliary proteins SecDF-YajC and YidC. Zn(2+) is required as a cofactor.

It is found in the cell inner membrane. Its subcellular location is the cytoplasm. It catalyses the reaction ATP + H2O + cellular proteinSide 1 = ADP + phosphate + cellular proteinSide 2.. Functionally, part of the Sec protein translocase complex. Interacts with the SecYEG preprotein conducting channel. Has a central role in coupling the hydrolysis of ATP to the transfer of proteins into and across the cell membrane, serving both as a receptor for the preprotein-SecB complex and as an ATP-driven molecular motor driving the stepwise translocation of polypeptide chains across the membrane. This is Protein translocase subunit SecA from Yersinia pseudotuberculosis serotype O:1b (strain IP 31758).